The primary structure comprises 819 residues: Myosin light chain kinase 3 (819 aa).

3 disordered regions span residues 146-256 (VPWR…TPSE), 273-334 (VVSP…TPPR), and 347-462 (EMLM…EQDC). Serine 152 bears the Phosphoserine mark. 2 stretches are compositionally biased toward basic and acidic residues: residues 158–170 (EENKERVEEEGGK) and 183–196 (DAREPGEESQKADV). Over residues 307–318 (GPGPQCPGPPGL) the composition is skewed to pro residues. 3 positions are modified to phosphoserine: serine 355, serine 401, and serine 408. Positions 515–770 (VCQHEVLGGG…ATQCLKHEWL (256 aa)) constitute a Protein kinase domain. Residues 521–529 (LGGGRFGQV) and lysine 544 each bind ATP. The active-site Proton acceptor is aspartate 636.

This sequence belongs to the protein kinase superfamily. CAMK Ser/Thr protein kinase family. Requires Mg(2+) as cofactor. Phosphorylated on serine residues. In terms of tissue distribution, restricted to heart.

The protein resides in the cytoplasm. It carries out the reaction L-seryl-[myosin light chain] + ATP = O-phospho-L-seryl-[myosin light chain] + ADP + H(+). The enzyme catalyses L-threonyl-[myosin light chain] + ATP = O-phospho-L-threonyl-[myosin light chain] + ADP + H(+). Its function is as follows. Kinase that phosphorylates MYL2 in vitro. Promotes sarcomere formation in cardiomyocytes and increases cardiomyocyte contractility. This is Myosin light chain kinase 3 (MYLK3) from Homo sapiens (Human).